The sequence spans 233 residues: MGQKVHPNGIRLGIVKPWNSTWYANTKEFADNLDSDFKVRQFLNKELEKASVSRIVIERPAKSIRVTIHTARPGIVIGKKGEDVEKLRKGVAEIAGVPAQINIAEVRKPELDAKLVADSITSQLERRVMFRRAMKRAVQNAMRLGAKGIKVEVSGRLGGAEIARTEWYREGRVPLHTLRADIDYNTSEAHTTYGVIGVKVWIFKGEILGGMAAVEQPEKPAAQPKKQQRKGRK.

One can recognise a KH type-2 domain in the interval 39 to 107 (VRQFLNKELE…PAQINIAEVR (69 aa)).

This sequence belongs to the universal ribosomal protein uS3 family. Part of the 30S ribosomal subunit. Forms a tight complex with proteins S10 and S14.

Binds the lower part of the 30S subunit head. Binds mRNA in the 70S ribosome, positioning it for translation. The polypeptide is Small ribosomal subunit protein uS3 (Edwardsiella ictaluri (strain 93-146)).